The primary structure comprises 430 residues: Tol-Pal system protein TolB (430 aa).

The N-terminal stretch at 1–21 (MKQALRVAFGFLILWASVLHA) is a signal peptide.

Belongs to the TolB family. The Tol-Pal system is composed of five core proteins: the inner membrane proteins TolA, TolQ and TolR, the periplasmic protein TolB and the outer membrane protein Pal. They form a network linking the inner and outer membranes and the peptidoglycan layer.

It localises to the periplasm. Its function is as follows. Part of the Tol-Pal system, which plays a role in outer membrane invagination during cell division and is important for maintaining outer membrane integrity. TolB occupies a key intermediary position in the Tol-Pal system because it communicates directly with both membrane-embedded components, Pal in the outer membrane and TolA in the inner membrane. The protein is Tol-Pal system protein TolB of Escherichia coli O8 (strain IAI1).